Reading from the N-terminus, the 218-residue chain is MANSSPVYDWFQERLEIQDIADDISSKYVPPHVNIFYCLGGITLVCFLIQFATGFAMTFYYKPTVAEAYSSVQYLMTDVSFGWLIRSVHRWSASMMVLMLILHVFRVYLTGGFKRPRELTWVTGVTMAVITVSFGVTGYSLPWDQVGYWAVKIVSGVPAAIPVVGDFMVELLRGGESVGQSTLTRFYSLHTFVMPWLLAVFMLMHFLMIRKQGISGPL.

The chain crosses the membrane as a helical span at residues I35 to F55. C38 serves as a coordination point for heme c. Heme b is bound by residues H89 and H103. The next 3 membrane-spanning stretches (helical) occupy residues A93–F113, L119–Y139, and L189–I209. Heme b-binding residues include H190 and H205.

It belongs to the cytochrome b family. PetB subfamily. In terms of assembly, the 4 large subunits of the cytochrome b6-f complex are cytochrome b6, subunit IV (17 kDa polypeptide, PetD), cytochrome f and the Rieske protein, while the 4 small subunits are PetG, PetL, PetM and PetN. The complex functions as a dimer. Heme b serves as cofactor. The cofactor is heme c.

The protein localises to the cellular thylakoid membrane. In terms of biological role, component of the cytochrome b6-f complex, which mediates electron transfer between photosystem II (PSII) and photosystem I (PSI), cyclic electron flow around PSI, and state transitions. This chain is Cytochrome b6, found in Synechococcus sp. (strain WH7803).